The primary structure comprises 530 residues: Ubiquitin carboxyl-terminal hydrolase 17-like protein 13 (530 aa).

Residues 80–375 form the USP domain; it reads AGLQNMGNTC…QAYVLFYIQK (296 aa). C89 functions as the Nucleophile in the catalytic mechanism. The active-site Proton acceptor is the H334. Composition is skewed to basic and acidic residues over residues 382 to 392 and 398 to 412; these read SESVSRGREPR and DTDR…KRDH. 2 disordered regions span residues 382-412 and 477-530; these read SESV…KRDH and NHHP…LVCQ. The segment covering 493 to 505 has biased composition (polar residues); sequence TPTHQESMNTGTL. Positions 510 to 524 are enriched in basic residues; it reads GRARRSKGKNKHSKR.

The protein belongs to the peptidase C19 family. USP17 subfamily.

The protein localises to the nucleus. The protein resides in the endoplasmic reticulum. It carries out the reaction Thiol-dependent hydrolysis of ester, thioester, amide, peptide and isopeptide bonds formed by the C-terminal Gly of ubiquitin (a 76-residue protein attached to proteins as an intracellular targeting signal).. Functionally, deubiquitinating enzyme that removes conjugated ubiquitin from specific proteins to regulate different cellular processes that may include cell proliferation, progression through the cell cycle, apoptosis, cell migration, and the cellular response to viral infection. This chain is Ubiquitin carboxyl-terminal hydrolase 17-like protein 13 (USP17L13), found in Homo sapiens (Human).